Consider the following 135-residue polypeptide: Cytochrome b5 (135 aa).

Residues 4–80 (SKVYSLAEVS…MDEMCVGDID (77 aa)) enclose the Cytochrome b5 heme-binding domain. The heme site is built by His39 and His63. Residues 106–126 (FIIKLLQFLVPLIILGVAVGI) form a helical membrane-spanning segment.

It belongs to the cytochrome b5 family.

Its subcellular location is the endoplasmic reticulum membrane. It is found in the microsome membrane. Its function is as follows. Membrane bound hemoprotein which function as an electron carrier for several membrane bound oxygenases. The polypeptide is Cytochrome b5 (Cuscuta reflexa (Southern Asian dodder)).